The following is a 150-amino-acid chain: D-aminoacyl-tRNA deacylase (150 aa).

The Gly-cisPro motif, important for rejection of L-amino acids motif lies at 140-141 (GP).

Belongs to the DTD family. In terms of assembly, homodimer.

The protein resides in the cytoplasm. The catalysed reaction is glycyl-tRNA(Ala) + H2O = tRNA(Ala) + glycine + H(+). The enzyme catalyses a D-aminoacyl-tRNA + H2O = a tRNA + a D-alpha-amino acid + H(+). It carries out the reaction D-tyrosyl-tRNA(Tyr) + H2O = D-tyrosine + tRNA(Tyr). In terms of biological role, an aminoacyl-tRNA editing enzyme that deacylates mischarged D-aminoacyl-tRNAs. Hydrolyzes D-tyrosyl-tRNA(Tyr) into D-tyrosine and free tRNA(Tyr). May also deacylate mischarged D-leucyl-tRNA(Leu). Also deacylates mischarged glycyl-tRNA(Ala), protecting cells against glycine mischarging by AlaRS. Acts via tRNA-based rather than protein-based catalysis; rejects L-amino acids rather than detecting D-amino acids in the active site. By recycling D-aminoacyl-tRNA to D-amino acids and free tRNA molecules, this enzyme counteracts the toxicity associated with the formation of D-aminoacyl-tRNA entities in vivo and helps enforce protein L-homochirality. This is D-aminoacyl-tRNA deacylase from Saccharomyces cerevisiae (strain ATCC 204508 / S288c) (Baker's yeast).